Reading from the N-terminus, the 340-residue chain is Anthranilate phosphoribosyltransferase (340 aa).

5-phospho-alpha-D-ribose 1-diphosphate is bound by residues Gly-80, 83–84 (GD), Thr-88, 90–93 (NIST), 108–116 (KHGNRAMSS), and Ser-120. Gly-80 serves as a coordination point for anthranilate. Residue Ser-92 coordinates Mg(2+). Asn-111 contributes to the anthranilate binding site. An anthranilate-binding site is contributed by Arg-166. Asp-225 and Glu-226 together coordinate Mg(2+).

The protein belongs to the anthranilate phosphoribosyltransferase family. As to quaternary structure, homodimer. The cofactor is Mg(2+).

It carries out the reaction N-(5-phospho-beta-D-ribosyl)anthranilate + diphosphate = 5-phospho-alpha-D-ribose 1-diphosphate + anthranilate. It participates in amino-acid biosynthesis; L-tryptophan biosynthesis; L-tryptophan from chorismate: step 2/5. In terms of biological role, catalyzes the transfer of the phosphoribosyl group of 5-phosphorylribose-1-pyrophosphate (PRPP) to anthranilate to yield N-(5'-phosphoribosyl)-anthranilate (PRA). This is Anthranilate phosphoribosyltransferase from Chloroflexus aggregans (strain MD-66 / DSM 9485).